The sequence spans 506 residues: Lysine--tRNA ligase (506 aa).

2 residues coordinate Mg(2+): E411 and E418.

It belongs to the class-II aminoacyl-tRNA synthetase family. As to quaternary structure, homodimer. Mg(2+) serves as cofactor.

Its subcellular location is the cytoplasm. The catalysed reaction is tRNA(Lys) + L-lysine + ATP = L-lysyl-tRNA(Lys) + AMP + diphosphate. The polypeptide is Lysine--tRNA ligase (Thermosynechococcus vestitus (strain NIES-2133 / IAM M-273 / BP-1)).